The following is a 104-amino-acid chain: Small ribosomal subunit protein uS10 (104 aa).

The protein belongs to the universal ribosomal protein uS10 family. As to quaternary structure, part of the 30S ribosomal subunit.

Functionally, involved in the binding of tRNA to the ribosomes. In Alkaliphilus metalliredigens (strain QYMF), this protein is Small ribosomal subunit protein uS10.